We begin with the raw amino-acid sequence, 244 residues long: Uridylate kinase (244 aa).

18 to 21 (KVSG) serves as a coordination point for ATP. Gly-60 is a UMP binding site. The ATP site is built by Gly-61 and Arg-65. Residues Asp-80 and 141–148 (TGNPFCTT) contribute to the UMP site. Residues Thr-168, Gln-169, Tyr-174, and Asp-177 each contribute to the ATP site.

It belongs to the UMP kinase family. Homohexamer.

The protein resides in the cytoplasm. The enzyme catalyses UMP + ATP = UDP + ADP. The protein operates within pyrimidine metabolism; CTP biosynthesis via de novo pathway; UDP from UMP (UMPK route): step 1/1. With respect to regulation, inhibited by UTP. Its function is as follows. Catalyzes the reversible phosphorylation of UMP to UDP. The chain is Uridylate kinase from Rickettsia typhi (strain ATCC VR-144 / Wilmington).